The sequence spans 357 residues: Acyl-CoA Delta12-desaturase (357 aa).

2 helical membrane-spanning segments follow: residues 49 to 69 (VLWFVLLHAGALYGVYLIFAS) and 72 to 92 (IYTTLYGFLLCELSLLSITAG). Positions 94, 99, 131, 134, and 135 each coordinate Fe cation. The Histidine box-1 motif lies at 94-99 (HRLWAH). The Histidine box-2 motif lies at 131–135 (HRVHH). 2 helical membrane passes run 195–215 (LVPFVSFVIPTLIPMYFWGET) and 223–245 (STMFRYCLSLNLTWLVNSAAHMW). Fe cation-binding residues include His-243, His-272, His-275, and His-276. The Histidine box-3 motif lies at 272–276 (HNFHH).

Belongs to the fatty acid desaturase type 1 family. It depends on Fe(2+) as a cofactor.

The protein resides in the membrane. It catalyses the reaction (9Z)-octadecenoyl-CoA + 2 Fe(II)-[cytochrome b5] + O2 + 2 H(+) = (9Z,12Z)-octadecadienoyl-CoA + 2 Fe(III)-[cytochrome b5] + 2 H2O. The enzyme catalyses (9Z)-hexadecenoyl-CoA + 2 Fe(II)-[cytochrome b5] + O2 + 2 H(+) = (9Z,12Z)-hexadecadienoyl-CoA + 2 Fe(III)-[cytochrome b5] + 2 H2O. The catalysed reaction is hexadecanoyl-CoA + 2 Fe(II)-[cytochrome b5] + O2 + 2 H(+) = (9Z)-hexadecenoyl-CoA + 2 Fe(III)-[cytochrome b5] + 2 H2O. Catalyzes the formation of a Delta12 double bond, acting on monounsaturated fatty acyl substrates like palmitoleoyl-CoA ((9Z)-hexadecenoyl-CoA) and oleoyl-CoA ((9Z)-octadecenoyl-CoA) with higher desaturation activity on (9Z)-octadecenoyl-CoA than (9Z)-hexadecenoyl-CoA. Requires preexisting cis double bond at the Delta9 position of fatty acyls to be able to insert the Delta12 double bond. Delta12-desaturation of (9Z)-octadecenoyl-CoA in insects produces (9Z,12Z)-octadecadienoyl-CoA (linoleoyl-CoA) which may be used to supply precursors of crucial mediators of immunity and reproduction and other essential functions. Can also catalyze Delta9-desaturation on saturated fatty acyl substrates like palmitoyl-CoA (hexadecanoyl-CoA) but with lower efficiency. The sequence is that of Acyl-CoA Delta12-desaturase from Acheta domesticus (House cricket).